The primary structure comprises 216 residues: U1 small nuclear ribonucleoprotein C (216 aa).

The segment at 4 to 36 adopts a Matrin-type zinc-finger fold; sequence FFCDYCDVYLTHDSMSVRKAHNSGRNHLRNVVD. Disordered stretches follow at residues 70–89 and 125–216; these read PQNQPGGVPPGLGFPPPGAG and PGGI…ADKR. 2 stretches are compositionally biased toward pro residues: residues 140–149 and 157–204; these read PPMPPFPGMP and GVPP…PPFG.

Belongs to the U1 small nuclear ribonucleoprotein C family. As to quaternary structure, U1 snRNP is composed of the 7 core Sm proteins B/B', D1, D2, D3, E, F and G that assemble in a heptameric protein ring on the Sm site of the small nuclear RNA to form the core snRNP, and at least 3 U1 snRNP-specific proteins U1-70K, U1-A and U1-C. U1-C interacts with U1 snRNA and the 5' splice-site region of the pre-mRNA.

It localises to the nucleus. In terms of biological role, component of the spliceosomal U1 snRNP, which is essential for recognition of the pre-mRNA 5' splice-site and the subsequent assembly of the spliceosome. U1-C is directly involved in initial 5' splice-site recognition for both constitutive and regulated alternative splicing. The interaction with the 5' splice-site seems to precede base-pairing between the pre-mRNA and the U1 snRNA. Stimulates commitment or early (E) complex formation by stabilizing the base pairing of the 5' end of the U1 snRNA and the 5' splice-site region. The polypeptide is U1 small nuclear ribonucleoprotein C (Neurospora crassa (strain ATCC 24698 / 74-OR23-1A / CBS 708.71 / DSM 1257 / FGSC 987)).